A 179-amino-acid chain; its full sequence is Large ribosomal subunit protein uL6 (179 aa).

This sequence belongs to the universal ribosomal protein uL6 family. In terms of assembly, part of the 50S ribosomal subunit.

Its function is as follows. This protein binds to the 23S rRNA, and is important in its secondary structure. It is located near the subunit interface in the base of the L7/L12 stalk, and near the tRNA binding site of the peptidyltransferase center. This Herpetosiphon aurantiacus (strain ATCC 23779 / DSM 785 / 114-95) protein is Large ribosomal subunit protein uL6.